Consider the following 233-residue polypeptide: Leucyl/phenylalanyl-tRNA--protein transferase (233 aa).

This sequence belongs to the L/F-transferase family.

The protein localises to the cytoplasm. It catalyses the reaction N-terminal L-lysyl-[protein] + L-leucyl-tRNA(Leu) = N-terminal L-leucyl-L-lysyl-[protein] + tRNA(Leu) + H(+). It carries out the reaction N-terminal L-arginyl-[protein] + L-leucyl-tRNA(Leu) = N-terminal L-leucyl-L-arginyl-[protein] + tRNA(Leu) + H(+). The enzyme catalyses L-phenylalanyl-tRNA(Phe) + an N-terminal L-alpha-aminoacyl-[protein] = an N-terminal L-phenylalanyl-L-alpha-aminoacyl-[protein] + tRNA(Phe). In terms of biological role, functions in the N-end rule pathway of protein degradation where it conjugates Leu, Phe and, less efficiently, Met from aminoacyl-tRNAs to the N-termini of proteins containing an N-terminal arginine or lysine. The polypeptide is Leucyl/phenylalanyl-tRNA--protein transferase (Chromobacterium violaceum (strain ATCC 12472 / DSM 30191 / JCM 1249 / CCUG 213 / NBRC 12614 / NCIMB 9131 / NCTC 9757 / MK)).